The following is a 413-amino-acid chain: Alpha-1-antitrypsin-like protein CM55-SI (413 aa).

An N-terminal signal peptide occupies residues 1 to 24 (MPSSISWGLLLLAALSCLGPGSLA). Q25 carries the post-translational modification Pyrrolidone carboxylic acid. 4 N-linked (GlcNAc...) asparagine glycosylation sites follow: N65, N102, N165, and N266. The interval 368-387 (GGTVLGNIRSILRYEVIFDR) is RCL.

The protein belongs to the serpin family. Expressed in liver.

This is Alpha-1-antitrypsin-like protein CM55-SI from Tamias sibiricus (Siberian chipmunk).